The primary structure comprises 234 residues: Probable septum site-determining protein MinC (234 aa).

This sequence belongs to the MinC family. As to quaternary structure, interacts with MinD and FtsZ.

Its function is as follows. Cell division inhibitor that blocks the formation of polar Z ring septums. Rapidly oscillates between the poles of the cell to destabilize FtsZ filaments that have formed before they mature into polar Z rings. Prevents FtsZ polymerization. The sequence is that of Probable septum site-determining protein MinC from Buchnera aphidicola subsp. Baizongia pistaciae (strain Bp).